A 517-amino-acid polypeptide reads, in one-letter code: Cytochrome P450 monooxygenase TRI4 (517 aa).

A helical membrane pass occupies residues 15-37 (AVGAAVAVGALYFFCQCFYNLYL). Asn-444 carries N-linked (GlcNAc...) asparagine glycosylation. Cys-452 is a binding site for heme.

It belongs to the cytochrome P450 family. The cofactor is heme.

The protein resides in the membrane. Its pathway is sesquiterpene biosynthesis; trichothecene biosynthesis. Functionally, cytochrome P450 monooxygenase; part of the gene cluster that mediates the production of the antimicrobial trichothecene harzianum A (HA) that plays a role in Botrytis cinerea antagonistic activity and plant defense priming. The biosynthesis of harzianum A begins with the cyclization of farnesyl diphosphate to trichodiene and is catalyzed by the trichodiene synthase TRI5. Trichodiene undergoes a series of oxygenations catalyzed by the cytochrome P450 monooxygenase TRI4. TRI4 controls the addition of 3 oxygens at C-2, C-11, and the C-12, C-13-epoxide to form the intermediate isotrichodiol. Isotrichodiol then undergoes a non-enzymatic isomerization and cyclization to form 12,13-epoxytrichothec-9-ene (EPT) which is further converted to trichodermol by the cytochrome P450 monooxygenase TRI11 via C-4 hydroxylation. The last step of HA synthesis is esterification of an octatriendioyl moiety to the C-4 oxygen of trichodermol. The octatriendioyl moiety is probably produced by the polyketide synthase TRI17 and the esterification performed by the trichothecene O-acetyltransferase TRI3. The chain is Cytochrome P450 monooxygenase TRI4 from Trichoderma arundinaceum.